We begin with the raw amino-acid sequence, 352 residues long: MTSTTITPHHIGGAWTRTERRRLASVVGAIVILHVLGVALYLGYSGNPAAAGGLAGSGVLAYVLGVRHAFDADHIAAIDDTTRLMLLRGRRPVGVGFFFAMGHSTVVVVLALVVALGASALTTTELEGVQEIGGLVATVVAVTFLSIVAGLNSVVLRNLLCLSRQVRAGSDITGDLESRLSERGLFTRLLGNRWRGLVRSSWHMYPVGLLMGLGLETASEVTLLTLTASAATGGTLSIAAVLSLPLLFAAGMSTFDTADSLFMTRAYSWSYQDPQRRLNFNIATTGATVVIGLFVAGIYVCALLAHLPMFAALSPIGDISENFEFLGYAVAAAFILTWTGALLFNHLKPQRN.

8 helical membrane passes run 23–43 (LASV…LYLG), 46–66 (GNPA…VLGV), 95–115 (VGFF…LVVA), 131–151 (EIGG…VAGL), 206–226 (PVGL…LLTL), 230–250 (AATG…LFAA), 290–310 (VIGL…LPMF), and 323–343 (FEFL…GALL).

The protein belongs to the NiCoT transporter (TC 2.A.52) family.

The protein localises to the cell membrane. With respect to regulation, cobalt uptake is inhibited by uncouplers (CCCP and 3,5-di-tert-butyl-4-hydroxybenzylidenemalononitrile) and by the addition of excess nickel. Mediates energy-dependent uptake of cobalt ions into the cell. Can also transport nickel ions, but cobalt is the preferred substrate. The chain is Cobalt transport protein NhlF (nhlF) from Rhodococcus rhodochrous.